Consider the following 370-residue polypeptide: 1-propanol dehydrogenase PduQ (370 aa).

It belongs to the iron-containing alcohol dehydrogenase family. In terms of assembly, interacts with PduP, probably via the N-terminus of PduQ. It depends on Fe cation as a cofactor.

The protein resides in the bacterial microcompartment. The catalysed reaction is 1-propanol + NAD(+) = propanal + NADH + H(+). It participates in polyol metabolism; 1,2-propanediol degradation. Its activity is regulated as follows. Enzyme is oxygen sensitive. Its function is as follows. An iron-dependent alcohol dehydrogenase required for optimal 1,2-propanediol (1,2-PD) degradation. NAD(+) and NADH are regenerated internally within the bacterial microcompartment (BMC) dedicated to 1,2-PD degradation by the PduP and PduQ enzymes, which reduce NAD(+) and oxidize NADH respectively, although there must also be cofactor transport across the BMC. In terms of biological role, the 1,2-PD-specific bacterial microcompartment (BMC) concentrates low levels of 1,2-PD catabolic enzymes, concentrates volatile reaction intermediates thus enhancing pathway flux and keeps the level of toxic, mutagenic propionaldehyde low. The protein is 1-propanol dehydrogenase PduQ of Salmonella typhimurium (strain LT2 / SGSC1412 / ATCC 700720).